A 412-amino-acid polypeptide reads, in one-letter code: Propionate kinase (412 aa).

This sequence belongs to the acetokinase family. PduW subfamily.

It is found in the cytoplasm. It catalyses the reaction propanoate + ATP = propanoyl phosphate + ADP. It functions in the pathway polyol metabolism; 1,2-propanediol degradation. Works with phosphate acetyltransferase (pta) to capture exogenous propionate and regenerate propionyl-CoA during degradation of 1,2-propanediol (1,2-PD). This Yersinia enterocolitica serotype O:8 / biotype 1B (strain NCTC 13174 / 8081) protein is Propionate kinase.